Consider the following 105-residue polypeptide: Large ribosomal subunit protein bL21 (105 aa).

Belongs to the bacterial ribosomal protein bL21 family. Part of the 50S ribosomal subunit. Contacts protein L20.

Functionally, this protein binds to 23S rRNA in the presence of protein L20. The sequence is that of Large ribosomal subunit protein bL21 from Rickettsia canadensis (strain McKiel).